Reading from the N-terminus, the 362-residue chain is Class I histocompatibility antigen, Gogo-B*0103 alpha chain (362 aa).

An N-terminal signal peptide occupies residues 1 to 24; it reads MRVTAPRTLLLLLSAALALTETWA. The alpha-1 stretch occupies residues 25–114; that stretch reads GSHSMRYFDT…ALRYYNQSEA (90 aa). Residues 25–308 are Extracellular-facing; it reads GSHSMRYFDT…EPSSQSTIPI (284 aa). Asn110 carries an N-linked (GlcNAc...) asparagine glycan. The interval 115–206 is alpha-2; it reads GSHTIQWMYG…ENGRETLQRA (92 aa). Cystine bridges form between Cys125–Cys188 and Cys227–Cys283. An alpha-3 region spans residues 207 to 298; the sequence is DTPKTHVTHH…GLPKPLTLRW (92 aa). The 87-residue stretch at 209 to 295 folds into the Ig-like C1-type domain; sequence PKTHVTHHPI…QHEGLPKPLT (87 aa). Positions 299–308 are connecting peptide; sequence EPSSQSTIPI. Residues 309 to 332 traverse the membrane as a helical segment; the sequence is VGIVAGLAVLAVVVIGAVVTAVIC. Over 333-362 the chain is Cytoplasmic; the sequence is RRKSSGGKGGSYSQAASSDSAQGSDVSLTA. The interval 335–362 is disordered; sequence KSSGGKGGSYSQAASSDSAQGSDVSLTA. Residues 343–362 show a composition bias toward low complexity; it reads SYSQAASSDSAQGSDVSLTA.

This sequence belongs to the MHC class I family. In terms of assembly, heterodimer of an alpha chain and a beta chain (beta-2-microglobulin).

The protein resides in the membrane. Functionally, involved in the presentation of foreign antigens to the immune system. The protein is Class I histocompatibility antigen, Gogo-B*0103 alpha chain of Gorilla gorilla gorilla (Western lowland gorilla).